Here is a 473-residue protein sequence, read N- to C-terminus: RUN domain-containing protein 3B (473 aa).

The interval 1–24 (MASRSLGGLSGIRGGGGGGGKKSL) is disordered. Positions 8–21 (GLSGIRGGGGGGGK) are enriched in gly residues. At R13 the chain carries Omega-N-methylarginine. Residues 57–206 (DDSSPEFNNF…IDFSFCLKGE (150 aa)) form the RUN domain. S232 and S233 each carry phosphoserine. Residues 317–342 (AHKLEKEQLEYIIVELQDQLTVLKNN) adopt a coiled-coil conformation. A compositionally biased stretch (polar residues) spans 399 to 422 (SLSQTSLDPGQSQEGDGKQDTLNV). The interval 399–428 (SLSQTSLDPGQSQEGDGKQDTLNVMSEGKE) is disordered.

The protein belongs to the RUNDC3 family. Interacts with RAP2A. In terms of tissue distribution, isoform 2 is expressed at high levels in brain, thymus, ovary, testis, leukocyte, liver, small intestine and prostate. Isoform 1 is expressed in the brain, testis and adrenal gland. It is activated in tumorigenic breast cancer cell lines and in the primary tumor of breast cancer patients. Activation also correlates with metastatic lymph node invasion and can be detected in metastatic epithelial cells from the lymph nodes and in the bone marrow of patients.

This is RUN domain-containing protein 3B (RUNDC3B) from Homo sapiens (Human).